Here is a 111-residue protein sequence, read N- to C-terminus: Probable 4-amino-4-deoxy-L-arabinose-phosphoundecaprenol flippase subunit ArnE (111 aa).

Topologically, residues 1–35 (MIWLTLVFASLLSVAGQLCQKQATCFVAINKRRKH) are cytoplasmic. Residues 36–56 (IVLWLGLALACLGLAMVLWLL) form a helical membrane-spanning segment. In terms of domain architecture, EamA spans 40 to 109 (LGLALACLGL…IIGGIVILGS (70 aa)). The Periplasmic segment spans residues 57 to 60 (VLQN). Residues 61–81 (VPVGIAYPMLSLNFVWVTLAA) form a helical membrane-spanning segment. At 82–87 (VKLWHE) the chain is on the cytoplasmic side. Residues 88 to 108 (PVSPRHWCGVAFIIGGIVILG) traverse the membrane as a helical segment. At 109–111 (STV) the chain is on the periplasmic side.

This sequence belongs to the ArnE family. Heterodimer of ArnE and ArnF.

Its subcellular location is the cell inner membrane. It functions in the pathway bacterial outer membrane biogenesis; lipopolysaccharide biosynthesis. Translocates 4-amino-4-deoxy-L-arabinose-phosphoundecaprenol (alpha-L-Ara4N-phosphoundecaprenol) from the cytoplasmic to the periplasmic side of the inner membrane. This chain is Probable 4-amino-4-deoxy-L-arabinose-phosphoundecaprenol flippase subunit ArnE, found in Escherichia coli (strain ATCC 8739 / DSM 1576 / NBRC 3972 / NCIMB 8545 / WDCM 00012 / Crooks).